We begin with the raw amino-acid sequence, 327 residues long: Cyclic AMP-responsive element-binding protein 1 (327 aa).

Disordered stretches follow at residues 1 to 27 (MTME…QMTV) and 94 to 113 (SEDS…RREI). The region spanning 87–146 (QISTIAESEDSQESVDSVTDSQKRREILSRRPSYRKILNDLSSDAPGVPRIEEEKSEEET) is the KID domain. Ser119 carries the post-translational modification Phosphoserine; by CaMK1, CaMK2, CaMK4, PKB/AKT1 or PKB/AKT2, RPS6KA3, RPS6KA4, RPS6KA5 and SGK1. Lys122 participates in a covalent cross-link: Glycyl lysine isopeptide (Lys-Gly) (interchain with G-Cter in SUMO2). The tract at residues 126 to 151 (DLSSDAPGVPRIEEEKSEEETSAPAI) is disordered. Ser128 carries the phosphoserine; by CaMK2 modification. Residue Ser257 is modified to Phosphoserine; by HIPK2. Positions 269–327 (ARKREVRLMKNREAARECRRKKKEYVKCLENRVAVLENQNKTLIEELKALKDLYCHKSD) constitute a bZIP domain. The segment at 270-295 (RKREVRLMKNREAARECRRKKKEYVK) is basic motif. Glycyl lysine isopeptide (Lys-Gly) (interchain with G-Cter in SUMO1) cross-links involve residues Lys271 and Lys290. Positions 297–318 (LENRVAVLENQNKTLIEELKAL) are leucine-zipper.

It belongs to the bZIP family. As to quaternary structure, interacts with PPRC1. Binds DNA as a dimer. This dimer is stabilized by magnesium ions. Interacts, through the bZIP domain, with the coactivators CRTC1/TORC1, CRTC2/TORC2 and CRTC3/TORC3. Interacts (phosphorylated form) with TOX3. When phosphorylated on Ser-119, binds CREBBP. Interacts with ARRB1. Binds to HIPK2. Interacts with SGK1. Interacts with CREBL2; regulates CREB1 phosphorylation, stability and transcriptional activity. Interacts with TSSK4; this interaction facilitates phosphorylation on Ser-119. Forms a complex with KMT2A and CREBBP. Interacts with TOX4; CREB1 is required for full induction of TOX4-dependent activity and the interaction is increased by cAMP and inhibited by insulin. In terms of processing, phosphorylation of Ser-119 allows CREBBP binding. Stimulated by phosphorylation. Phosphorylated Ser-128 can be detected in the suprachiasmatic nucleus (SCN), the amygdala, the cortex, and the hippocampus but not in the striatum nor in the cerebellum. In the SCN, phosphorylation of Ser-128 and Ser-119 are stimulated by light exposure and submitted to circadian oscillations. In the retina, only phosphorylation of Ser-119 can be detected upon light exposure. Phosphorylation of both Ser-119 and Ser-128 in the SCN regulates the activity of CREB and participates in circadian rhythm generation. Phosphorylated upon calcium influx by CaMK4 and CaMK2 on Ser-119. CaMK4 is much more potent than CAMK2 in activating CREB. Phosphorylated by CaMK2 on Ser-128. Phosphorylation of Ser-128 blocks CREB-mediated transcription even when Ser-119 is phosphorylated. Phosphorylated by CaMK1. Phosphorylation of Ser-271 by HIPK2 in response to genotoxic stress promotes CREB1 activity, facilitating the recruitment of the coactivator CBP. Phosphorylated at Ser-119 by RPS6KA3, RPS6KA4 and RPS6KA5 in response to mitogenic or stress stimuli. CREBL2 positively regulates phosphorylation at Ser-119 thereby stimulating CREB1 transcriptional activity. In liver, phosphorylation is induced by fasting or glucagon in a circadian fashion. Phosphorylated by TSSK4 on Ser-119. Sumoylated with SUMO1. Sumoylation on Lys-290, but not on Lys-271, is required for nuclear localization of this protein. Sumoylation is enhanced under hypoxia, promoting nuclear localization and stabilization. Expressed in the heart (at protein level).

It localises to the nucleus. In terms of biological role, phosphorylation-dependent transcription factor that stimulates transcription upon binding to the DNA cAMP response element (CRE), a sequence present in many viral and cellular promoters. Transcription activation is enhanced by the TORC coactivators which act independently of Ser-119 phosphorylation. Involved in different cellular processes including the synchronization of circadian rhythmicity and the differentiation of adipose cells. Regulates the expression of apoptotic and inflammatory response factors in cardiomyocytes in response to ERFE-mediated activation of AKT signaling. This is Cyclic AMP-responsive element-binding protein 1 (Creb1) from Mus musculus (Mouse).